A 329-amino-acid chain; its full sequence is Biotin synthase (329 aa).

Residues 38–262 (NTIQVSTLLS…IMPYSYIRLS (225 aa)) form the Radical SAM core domain. The [4Fe-4S] cluster site is built by C53, C57, and C60. Residues C97, C128, C188, and R260 each coordinate [2Fe-2S] cluster.

It belongs to the radical SAM superfamily. Biotin synthase family. In terms of assembly, homodimer. It depends on [4Fe-4S] cluster as a cofactor. Requires [2Fe-2S] cluster as cofactor.

It carries out the reaction (4R,5S)-dethiobiotin + (sulfur carrier)-SH + 2 reduced [2Fe-2S]-[ferredoxin] + 2 S-adenosyl-L-methionine = (sulfur carrier)-H + biotin + 2 5'-deoxyadenosine + 2 L-methionine + 2 oxidized [2Fe-2S]-[ferredoxin]. It functions in the pathway cofactor biosynthesis; biotin biosynthesis; biotin from 7,8-diaminononanoate: step 2/2. In terms of biological role, catalyzes the conversion of dethiobiotin (DTB) to biotin by the insertion of a sulfur atom into dethiobiotin via a radical-based mechanism. The polypeptide is Biotin synthase (Acinetobacter baylyi (strain ATCC 33305 / BD413 / ADP1)).